The primary structure comprises 205 residues: GTP cyclohydrolase-2 (205 aa).

A GTP-binding site is contributed by 49 to 53 (RLHSE). Cysteine 54, cysteine 65, and cysteine 67 together coordinate Zn(2+). GTP-binding positions include glutamine 70, 92–94 (EGR), and threonine 114. Residue aspartate 126 is the Proton acceptor of the active site. Arginine 128 functions as the Nucleophile in the catalytic mechanism. 2 residues coordinate GTP: threonine 149 and lysine 154.

Belongs to the GTP cyclohydrolase II family. Zn(2+) serves as cofactor.

The catalysed reaction is GTP + 4 H2O = 2,5-diamino-6-hydroxy-4-(5-phosphoribosylamino)-pyrimidine + formate + 2 phosphate + 3 H(+). The protein operates within cofactor biosynthesis; riboflavin biosynthesis; 5-amino-6-(D-ribitylamino)uracil from GTP: step 1/4. Functionally, catalyzes the conversion of GTP to 2,5-diamino-6-ribosylamino-4(3H)-pyrimidinone 5'-phosphate (DARP), formate and pyrophosphate. In Pseudomonas aeruginosa (strain UCBPP-PA14), this protein is GTP cyclohydrolase-2.